Consider the following 127-residue polypeptide: Large ribosomal subunit protein bL12 (127 aa).

Belongs to the bacterial ribosomal protein bL12 family. As to quaternary structure, homodimer. Part of the ribosomal stalk of the 50S ribosomal subunit. Forms a multimeric L10(L12)X complex, where L10 forms an elongated spine to which 2 to 4 L12 dimers bind in a sequential fashion. Binds GTP-bound translation factors.

In terms of biological role, forms part of the ribosomal stalk which helps the ribosome interact with GTP-bound translation factors. Is thus essential for accurate translation. The chain is Large ribosomal subunit protein bL12 from Leptospira interrogans serogroup Icterohaemorrhagiae serovar copenhageni (strain Fiocruz L1-130).